Consider the following 341-residue polypeptide: Phosphate acyltransferase (341 aa).

It belongs to the PlsX family. In terms of assembly, homodimer. Probably interacts with PlsY.

The protein resides in the cytoplasm. It carries out the reaction a fatty acyl-[ACP] + phosphate = an acyl phosphate + holo-[ACP]. It functions in the pathway lipid metabolism; phospholipid metabolism. Functionally, catalyzes the reversible formation of acyl-phosphate (acyl-PO(4)) from acyl-[acyl-carrier-protein] (acyl-ACP). This enzyme utilizes acyl-ACP as fatty acyl donor, but not acyl-CoA. The polypeptide is Phosphate acyltransferase (Pseudoalteromonas atlantica (strain T6c / ATCC BAA-1087)).